The primary structure comprises 63 residues: MTLFNSISSISNSTGISKESLIGNLNSNGIATGNISVSWLGGFDGCGGCGGGCGKNDFLYSSL.

This sequence belongs to the UPF0512 family.

In Dictyostelium discoideum (Social amoeba), this protein is UPF0512 protein X.